A 424-amino-acid polypeptide reads, in one-letter code: Glutamyl-tRNA reductase (424 aa).

Substrate contacts are provided by residues 49–52 (TCNR), Ser107, 112–114 (EPQ), and Gln118. The active-site Nucleophile is the Cys50. 187–192 (GAGETI) provides a ligand contact to NADP(+).

It belongs to the glutamyl-tRNA reductase family. Homodimer.

The catalysed reaction is (S)-4-amino-5-oxopentanoate + tRNA(Glu) + NADP(+) = L-glutamyl-tRNA(Glu) + NADPH + H(+). The protein operates within porphyrin-containing compound metabolism; protoporphyrin-IX biosynthesis; 5-aminolevulinate from L-glutamyl-tRNA(Glu): step 1/2. In terms of biological role, catalyzes the NADPH-dependent reduction of glutamyl-tRNA(Glu) to glutamate 1-semialdehyde (GSA). This is Glutamyl-tRNA reductase from Pseudomonas fluorescens (strain ATCC BAA-477 / NRRL B-23932 / Pf-5).